Consider the following 471-residue polypeptide: Glutamate--tRNA ligase (471 aa).

The 'HIGH' region signature appears at 9–19 (PSPTGYLHVGG). Positions 98, 100, 125, and 127 each coordinate Zn(2+). The short motif at 237–241 (KLSKR) is the 'KMSKS' region element. An ATP-binding site is contributed by lysine 240.

This sequence belongs to the class-I aminoacyl-tRNA synthetase family. Glutamate--tRNA ligase type 1 subfamily. In terms of assembly, monomer. Zn(2+) serves as cofactor.

It is found in the cytoplasm. It catalyses the reaction tRNA(Glu) + L-glutamate + ATP = L-glutamyl-tRNA(Glu) + AMP + diphosphate. Its function is as follows. Catalyzes the attachment of glutamate to tRNA(Glu) in a two-step reaction: glutamate is first activated by ATP to form Glu-AMP and then transferred to the acceptor end of tRNA(Glu). The chain is Glutamate--tRNA ligase from Shigella sonnei (strain Ss046).